A 409-amino-acid chain; its full sequence is Argininosuccinate synthase (409 aa).

Residues Ala11 to Ser19 and Ala38 each bind ATP. 2 residues coordinate L-citrulline: Tyr91 and Ser96. Gly121 provides a ligand contact to ATP. Thr123, Asn127, and Asp128 together coordinate L-aspartate. Asn127 is a binding site for L-citrulline. Arg131, Ser182, Ser191, Glu267, and Tyr279 together coordinate L-citrulline.

It belongs to the argininosuccinate synthase family. Type 1 subfamily. Homotetramer.

It localises to the cytoplasm. It carries out the reaction L-citrulline + L-aspartate + ATP = 2-(N(omega)-L-arginino)succinate + AMP + diphosphate + H(+). It functions in the pathway amino-acid biosynthesis; L-arginine biosynthesis; L-arginine from L-ornithine and carbamoyl phosphate: step 2/3. The sequence is that of Argininosuccinate synthase from Nitrobacter hamburgensis (strain DSM 10229 / NCIMB 13809 / X14).